The sequence spans 78 residues: Probable [Fe-S]-dependent transcriptional repressor (78 aa).

Iron-sulfur cluster is bound by residues C56, C61, C64, and C70.

This sequence belongs to the FeoC family.

Its function is as follows. May function as a transcriptional regulator that controls feoABC expression. The sequence is that of Probable [Fe-S]-dependent transcriptional repressor from Salmonella heidelberg (strain SL476).